A 358-amino-acid chain; its full sequence is Triacylglycerol lipase (358 aa).

The signal sequence occupies residues 1-39 (MVRSMRSRVAARAVAWALAVMPLAGAAGLTMAASPAAVA). One can recognise an AB hydrolase-1 domain in the interval 48–327 (YPVILVHGLA…TSYHWNHLDE (280 aa)). Leu56 serves as a coordination point for substrate. Ser126 functions as the Nucleophile in the catalytic mechanism. Residue Gln127 participates in substrate binding. A disulfide bond links Cys229 and Cys308. Asp280 provides a ligand contact to Ca(2+). Catalysis depends on charge relay system residues Asp302 and His324. Ca(2+) contacts are provided by Asp326, Gln330, and Val334.

Belongs to the AB hydrolase superfamily. Pseudomonas lipase family. As to quaternary structure, monomer. Interacts with lipase-specific foldase Lif. Ca(2+) is required as a cofactor.

The protein localises to the secreted. It catalyses the reaction a triacylglycerol + H2O = a diacylglycerol + a fatty acid + H(+). Its function is as follows. Catalyzes the hydrolysis of triacylglycerol. In Burkholderia plantarii, this protein is Triacylglycerol lipase.